A 332-amino-acid polypeptide reads, in one-letter code: Ketol-acid reductoisomerase (NAD(+)) (332 aa).

The region spanning 1–186 (MEILHDEDVD…HWTKAGILEC (186 aa)) is the KARI N-terminal Rossmann domain. Residues 24–27 (YGAQ), glutamate 46, asparagine 55, serine 57, and 87–90 (DEVQ) each bind NAD(+). The active site involves histidine 112. Glycine 138 contributes to the NAD(+) binding site. Residues 187 to 332 (TFEQETYEDL…AEIRKLFAQK (146 aa)) form the KARI C-terminal knotted domain. Mg(2+) contacts are provided by aspartate 195, glutamate 199, glutamate 231, and glutamate 235. Substrate is bound at residue serine 256.

Belongs to the ketol-acid reductoisomerase family. Homodimer. Mg(2+) serves as cofactor.

It carries out the reaction (2R)-2,3-dihydroxy-3-methylbutanoate + NAD(+) = (2S)-2-acetolactate + NADH + H(+). It participates in amino-acid biosynthesis; L-isoleucine biosynthesis; L-isoleucine from 2-oxobutanoate: step 2/4. It functions in the pathway amino-acid biosynthesis; L-valine biosynthesis; L-valine from pyruvate: step 2/4. In terms of biological role, involved in the biosynthesis of branched-chain amino acids (BCAA). Catalyzes an alkyl-migration followed by a ketol-acid reduction of (S)-2-acetolactate (S2AL) to yield (R)-2,3-dihydroxy-isovalerate. In the isomerase reaction, S2AL is rearranged via a Mg-dependent methyl migration to produce 3-hydroxy-3-methyl-2-ketobutyrate (HMKB). In the reductase reaction, this 2-ketoacid undergoes a metal-dependent reduction by NADH to yield (R)-2,3-dihydroxy-isovalerate. This is Ketol-acid reductoisomerase (NAD(+)) from Uncultured archaeon GZfos26G2.